The following is a 73-amino-acid chain: UPF0154 protein PEPE_0872 (73 aa).

The chain crosses the membrane as a helical span at residues 5–25 (IWIMIVIIALLVGAVGGFFFA).

It belongs to the UPF0154 family.

It is found in the cell membrane. This Pediococcus pentosaceus (strain ATCC 25745 / CCUG 21536 / LMG 10740 / 183-1w) protein is UPF0154 protein PEPE_0872.